We begin with the raw amino-acid sequence, 509 residues long: Activin receptor type-1 (509 aa).

A signal peptide spans methionine 1–serine 20. Residues methionine 21 to glutamate 123 are Extracellular-facing. Asparagine 102 carries N-linked (GlcNAc...) asparagine glycosylation. A helical transmembrane segment spans residues valine 124 to leucine 146. Residues arginine 147–cysteine 509 lie on the Cytoplasmic side of the membrane. Residues serine 178 to glutamine 207 enclose the GS domain. Residues isoleucine 208 to leucine 502 enclose the Protein kinase domain. ATP is bound by residues valine 214–valine 222 and lysine 235. Catalysis depends on aspartate 336, which acts as the Proton acceptor. Serine 501 is modified (phosphoserine).

It belongs to the protein kinase superfamily. TKL Ser/Thr protein kinase family. TGFB receptor subfamily. Interacts with FKBP1A. Interacts with FCHO1. Interacts with CLU. Interacts with type II receptors AMHR2 and ACVR2A. Interacts with BMP7. Interacts with GDF2/BMP9. Interacts with BMP6 (when glycosylated); the interaction may induce HAMP expression. Interacts with TSC22D1/TSC-22. Mg(2+) serves as cofactor. Requires Mn(2+) as cofactor. Urogenital ridge, testis, ovary, brain and lungs.

The protein resides in the membrane. It catalyses the reaction L-threonyl-[receptor-protein] + ATP = O-phospho-L-threonyl-[receptor-protein] + ADP + H(+). It carries out the reaction L-seryl-[receptor-protein] + ATP = O-phospho-L-seryl-[receptor-protein] + ADP + H(+). In terms of biological role, bone morphogenetic protein (BMP) type I receptor that is involved in a wide variety of biological processes, including bone, heart, cartilage, nervous, and reproductive system development and regulation. As a type I receptor, forms heterotetrameric receptor complexes with the type II receptors AMHR2, ACVR2A ors ACVR2B. Upon binding of ligands such as BMP7 or GDF2/BMP9 to the heteromeric complexes, type II receptors transphosphorylate ACVR1 intracellular domain. In turn, ACVR1 kinase domain is activated and subsequently phosphorylates SMAD1/5/8 proteins that transduce the signal. In addition to its role in mediating BMP pathway-specific signaling, suppresses TGFbeta/activin pathway signaling by interfering with the binding of activin to its type II receptor. Besides canonical SMAD signaling, can activate non-canonical pathways such as p38 mitogen-activated protein kinases/MAPKs. May promote the expression of HAMP, potentially via its interaction with BMP6. The protein is Activin receptor type-1 (Acvr1) of Rattus norvegicus (Rat).